We begin with the raw amino-acid sequence, 400 residues long: CinA-like protein (400 aa).

Belongs to the CinA family.

This Escherichia coli (strain SMS-3-5 / SECEC) protein is CinA-like protein.